We begin with the raw amino-acid sequence, 644 residues long: CTP synthase (644 aa).

The region spanning 300-551 is the Glutamine amidotransferase type-1 domain; sequence SIAIVGKYTK…LGLILASVDR (252 aa). Residues C399, H527, and E529 each act as for GATase activity in the active site.

The protein belongs to the CTP synthase family.

It catalyses the reaction UTP + L-glutamine + ATP + H2O = CTP + L-glutamate + ADP + phosphate + 2 H(+). Its pathway is pyrimidine metabolism; CTP biosynthesis via de novo pathway; CTP from UDP: step 2/2. Catalyzes the ATP-dependent amination of UTP to CTP with either L-glutamine or ammonia as the source of nitrogen. Constitutes the rate-limiting enzyme in the synthesis of cytosine nucleotides. The protein is CTP synthase of Drosophila pseudoobscura pseudoobscura (Fruit fly).